The following is a 64-amino-acid chain: Large ribosomal subunit protein bL35 (64 aa).

It belongs to the bacterial ribosomal protein bL35 family.

The chain is Large ribosomal subunit protein bL35 from Coxiella burnetii (strain RSA 493 / Nine Mile phase I).